The following is a 434-amino-acid chain: Maintenance of mitochondrial morphology protein 1 (434 aa).

At 1–105 the chain is on the lumenal side; it reads MEMSELLASE…SFSSQSFAEG (105 aa). A helical transmembrane segment spans residues 106 to 126; sequence LIVGQLSVIVALIFVIKFFVF. Topologically, residues 127–434 are cytoplasmic; that stretch reads SEGGTKTATA…DDSVSVKSND (308 aa). Residues 194-408 form the SMP-LTD domain; sequence SPESLDWFNV…EPRFQFVKLP (215 aa). The interval 415-434 is disordered; the sequence is KNTRKEKTDTDDSVSVKSND.

Belongs to the MMM1 family. As to quaternary structure, homodimer. Component of the ER-mitochondria encounter structure (ERMES) or MDM complex, composed of MMM1, MDM10, MDM12 and MDM34. An MMM1 homodimer associates with one molecule of MDM12 on each side in a pairwise head-to-tail manner, and the SMP-LTD domains of MMM1 and MDM12 generate a continuous hydrophobic tunnel for phospholipid trafficking.

The protein localises to the endoplasmic reticulum membrane. Component of the ERMES/MDM complex, which serves as a molecular tether to connect the endoplasmic reticulum (ER) and mitochondria. Components of this complex are involved in the control of mitochondrial shape and protein biogenesis, and function in nonvesicular lipid trafficking between the ER and mitochondria. The MDM12-MMM1 subcomplex functions in the major beta-barrel assembly pathway that is responsible for biogenesis of all outer membrane beta-barrel proteins, and acts in a late step after the SAM complex. The MDM10-MDM12-MMM1 subcomplex further acts in the TOM40-specific pathway after the action of the MDM12-MMM1 complex. Essential for establishing and maintaining the structure of mitochondria and maintenance of mtDNA nucleoids. In Kluyveromyces lactis (strain ATCC 8585 / CBS 2359 / DSM 70799 / NBRC 1267 / NRRL Y-1140 / WM37) (Yeast), this protein is Maintenance of mitochondrial morphology protein 1.